The primary structure comprises 144 residues: Prefoldin subunit alpha (144 aa).

This sequence belongs to the prefoldin alpha subunit family. In terms of assembly, heterohexamer of two alpha and four beta subunits.

Its subcellular location is the cytoplasm. Molecular chaperone capable of stabilizing a range of proteins. Seems to fulfill an ATP-independent, HSP70-like function in archaeal de novo protein folding. In Methanococcus maripaludis (strain C7 / ATCC BAA-1331), this protein is Prefoldin subunit alpha.